We begin with the raw amino-acid sequence, 507 residues long: MALPIILCLAVILWTSWRLLDALFLSPLHRVPGPVLARLTPLRAIYARLPSRVIPAALADFHSYGDIYLSKPRTITISHPRDVRAILASSEFQKIDVYHGLNDPVMANIVTFSDPKLASRRRRQIGPYFNPSYLAKMEELILRCGCRAVADKWGRLIAQQGHGPQKSVKVNYRHDLQLATFDIMSALAFGRWLDSLKEEGESVAIVEWIMATAVYIGVRINFRLLMVFPFSRLVRRWTRAYAEFVQFSKHAVASRKELLAQGCQKPVDLLQAFIDAEDPDSKVKMTTVEVQAESVGMQLAGSETTAASLTWAVHLFTLYPEYYRIAVDEVRGQFGPNHLITYADCSRLVFLEAFVYEMLRYTPITSSFMPRVSFTKGTTLQGHYIPPGTEIAFNLIAMNNREDVWEEPERFLPDRFLKDPDLKRSVFAFSYGTRSCIGRHLAWMEMMTILANLLKDYDWSLPEDSLYGPHHVDEKGIPIRMPSKCHIVFAPTHPDRDCQLVISRPKT.

Residues 1–22 form the signal peptide; it reads MALPIILCLAVILWTSWRLLDA. Position 436 (C436) interacts with heme.

Belongs to the cytochrome P450 family. It depends on heme as a cofactor.

Its pathway is mycotoxin biosynthesis. In terms of biological role, cytochrome P450 monooxygenase; part of the gene cluster that mediates the biosynthesis of helvolic acid, an antibacterial nortriterpenoid. Protostadienol synthase helA cyclizes (3S)-oxidosqualene to (17Z)-protosta-17(20),24-dien-3-beta-ol (protostadienol). The synthesis of protostadienol is followed by several steps of monooxygenation, dehydrogenation, and acyl transfer to yield the final helvolic acid. Following the cyclization to the tetracyclic protostadienol by helA, cytochrome P450 monooxygenases helB1-mediated and helB2-mediated oxidation at C-4 and C-16, acyltransferase helD2-dependent acetylation of 16-OH, oxidation of C-21 by cytochrome P450 monooxygenase helB4, and short chain dehydrogenase helC-dependent oxidative decarboxylation yield the fusidane skeleton. This intermediate is further modified in three additional steps mediated by the cytochrome P450 monooxygenase helB3, the acyltransferase helD1, and the 3-ketosteroid 1-dehydrogenase helE to give helvolic acid. Compared with the late stages in the biosynthesis of helvolic acid, enzymes involved in the early stage modifications act in a relatively strict order. The hydroxylation of C-16 by helB1 and subsequent acetylation by helD2 should occur before the helB3-mediated oxidation of C-21. C-4 demethylation in fusidane-type antibiotics proceeds in an unusual manner though it is also achieved by oxidative decarboxylation. The methyl group at C-4 beta position is oxidized by helB1 and subsequently removed by the short chain dehydrogenase helC. The polypeptide is Cytochrome P450 monooxygenase helB2 (Aspergillus fumigatus (strain ATCC MYA-4609 / CBS 101355 / FGSC A1100 / Af293) (Neosartorya fumigata)).